Consider the following 739-residue polypeptide: Gamma-tubulin complex component 4 homolog (739 aa).

Belongs to the TUBGCP family.

The protein resides in the cytoplasm. It is found in the cytoskeleton. It localises to the microtubule organizing center. Gamma-tubulin complex is necessary for microtubule nucleation at the microtubule organizing centers (MTOCs). The chain is Gamma-tubulin complex component 4 homolog (85P) from Medicago truncatula (Barrel medic).